Consider the following 627-residue polypeptide: UvrABC system protein C (627 aa).

The region spanning 26–105 (PEPGVYFMRD…IKQHQPYFNV (80 aa)) is the GIY-YIG domain. Residues 215 to 250 (QELIDILSEQMEKAAEALNFEVAARIRDQIAGLKSL) enclose the UVR domain.

The protein belongs to the UvrC family. Interacts with UvrB in an incision complex.

The protein resides in the cytoplasm. The UvrABC repair system catalyzes the recognition and processing of DNA lesions. UvrC both incises the 5' and 3' sides of the lesion. The N-terminal half is responsible for the 3' incision and the C-terminal half is responsible for the 5' incision. This Trichormus variabilis (strain ATCC 29413 / PCC 7937) (Anabaena variabilis) protein is UvrABC system protein C.